We begin with the raw amino-acid sequence, 182 residues long: Probable peptidyl-prolyl cis-trans isomerase A (182 aa).

Residues 13 to 181 (ATATATLHTN…DPVVIESITI (169 aa)) enclose the PPIase cyclophilin-type domain.

It belongs to the cyclophilin-type PPIase family.

It is found in the cytoplasm. The enzyme catalyses [protein]-peptidylproline (omega=180) = [protein]-peptidylproline (omega=0). Its function is as follows. PPIases accelerate the folding of proteins. It catalyzes the cis-trans isomerization of proline imidic peptide bonds in oligopeptides. The sequence is that of Probable peptidyl-prolyl cis-trans isomerase A (ppiA) from Mycobacterium bovis (strain ATCC BAA-935 / AF2122/97).